Reading from the N-terminus, the 214-residue chain is MYKIGLTGGIGSGKSRVADMLAEWGASVIDADEISHALTAPGGAAMPAIAREFGPQAVAADGALDRAWMRDLVFREPAARGRLEALLHPLIGLHTEQAAAQARGLYLVFVVPLLVESGRWRGRVDRICVVDCDPATQIARVQKRSGLTEPAIRRIMAAQAARATRLEAADDVIVNDGATSPDTLRARARTLHDRWLALAGAASQPGGKAAGTPE.

Residues 3-202 (KIGLTGGIGS…DRWLALAGAA (200 aa)) enclose the DPCK domain. 11 to 16 (GSGKSR) serves as a coordination point for ATP.

It belongs to the CoaE family.

The protein resides in the cytoplasm. It carries out the reaction 3'-dephospho-CoA + ATP = ADP + CoA + H(+). It functions in the pathway cofactor biosynthesis; coenzyme A biosynthesis; CoA from (R)-pantothenate: step 5/5. Its function is as follows. Catalyzes the phosphorylation of the 3'-hydroxyl group of dephosphocoenzyme A to form coenzyme A. In Bordetella bronchiseptica (strain ATCC BAA-588 / NCTC 13252 / RB50) (Alcaligenes bronchisepticus), this protein is Dephospho-CoA kinase.